Reading from the N-terminus, the 63-residue chain is Large ribosomal subunit protein uL29 (63 aa).

This sequence belongs to the universal ribosomal protein uL29 family.

In Shewanella frigidimarina (strain NCIMB 400), this protein is Large ribosomal subunit protein uL29.